We begin with the raw amino-acid sequence, 405 residues long: Tyrosine--tRNA ligase (405 aa).

Residues 48 to 57 (PSRPDLHLGH) carry the 'HIGH' region motif. The 'KMSKS' region motif lies at 232–236 (KMSKS). Lys-235 provides a ligand contact to ATP. Residues 339–400 (LPLVDLLTTL…AGKRKFFRIA (62 aa)) enclose the S4 RNA-binding domain.

Belongs to the class-I aminoacyl-tRNA synthetase family. TyrS type 2 subfamily. In terms of assembly, homodimer.

It is found in the cytoplasm. The enzyme catalyses tRNA(Tyr) + L-tyrosine + ATP = L-tyrosyl-tRNA(Tyr) + AMP + diphosphate + H(+). Functionally, catalyzes the attachment of tyrosine to tRNA(Tyr) in a two-step reaction: tyrosine is first activated by ATP to form Tyr-AMP and then transferred to the acceptor end of tRNA(Tyr). The polypeptide is Tyrosine--tRNA ligase (Chlorobium luteolum (strain DSM 273 / BCRC 81028 / 2530) (Pelodictyon luteolum)).